We begin with the raw amino-acid sequence, 673 residues long: UvrABC system protein B (673 aa).

Positions 26 to 414 (EGLEDGLAHQ…GGDVVDQVVR (389 aa)) constitute a Helicase ATP-binding domain. 39 to 46 (GVTGSGKT) is an ATP binding site. A Beta-hairpin motif is present at residues 92 to 115 (YYDYYQPEAYVPSSDTFIEKDASV). Residues 431-597 (QVDDLLSEIR…GLNKKVVDIL (167 aa)) enclose the Helicase C-terminal domain. A UVR domain is found at 633-668 (QQKIHELEGLMMQHAQNLEFEEAAQIRDQLHQLREL).

Belongs to the UvrB family. Forms a heterotetramer with UvrA during the search for lesions. Interacts with UvrC in an incision complex.

The protein localises to the cytoplasm. Functionally, the UvrABC repair system catalyzes the recognition and processing of DNA lesions. A damage recognition complex composed of 2 UvrA and 2 UvrB subunits scans DNA for abnormalities. Upon binding of the UvrA(2)B(2) complex to a putative damaged site, the DNA wraps around one UvrB monomer. DNA wrap is dependent on ATP binding by UvrB and probably causes local melting of the DNA helix, facilitating insertion of UvrB beta-hairpin between the DNA strands. Then UvrB probes one DNA strand for the presence of a lesion. If a lesion is found the UvrA subunits dissociate and the UvrB-DNA preincision complex is formed. This complex is subsequently bound by UvrC and the second UvrB is released. If no lesion is found, the DNA wraps around the other UvrB subunit that will check the other stand for damage. This Shigella flexneri protein is UvrABC system protein B.